We begin with the raw amino-acid sequence, 322 residues long: Beta-ketoacyl-[acyl-carrier-protein] synthase III (322 aa).

Active-site residues include C113 and H247. The interval 248-252 is ACP-binding; it reads QANIR. Residue N278 is part of the active site.

The protein belongs to the thiolase-like superfamily. FabH family. Homodimer.

It is found in the cytoplasm. The catalysed reaction is malonyl-[ACP] + acetyl-CoA + H(+) = 3-oxobutanoyl-[ACP] + CO2 + CoA. It participates in lipid metabolism; fatty acid biosynthesis. In terms of biological role, catalyzes the condensation reaction of fatty acid synthesis by the addition to an acyl acceptor of two carbons from malonyl-ACP. Catalyzes the first condensation reaction which initiates fatty acid synthesis and may therefore play a role in governing the total rate of fatty acid production. Possesses both acetoacetyl-ACP synthase and acetyl transacylase activities. Its substrate specificity determines the biosynthesis of branched-chain and/or straight-chain of fatty acids. The sequence is that of Beta-ketoacyl-[acyl-carrier-protein] synthase III from Tropheryma whipplei (strain TW08/27) (Whipple's bacillus).